Here is a 150-residue protein sequence, read N- to C-terminus: Large ribosomal subunit protein uL15 (150 aa).

A compositionally biased stretch (basic and acidic residues) spans 1 to 13 (MADNDAIKVHDLR). Residues 1 to 44 (MADNDAIKVHDLRPAPGAKTAKTRVGRGEASKGKTAGRGTKGTK) are disordered.

This sequence belongs to the universal ribosomal protein uL15 family. In terms of assembly, part of the 50S ribosomal subunit.

In terms of biological role, binds to the 23S rRNA. This is Large ribosomal subunit protein uL15 from Micrococcus luteus (strain ATCC 4698 / DSM 20030 / JCM 1464 / CCM 169 / CCUG 5858 / IAM 1056 / NBRC 3333 / NCIMB 9278 / NCTC 2665 / VKM Ac-2230) (Micrococcus lysodeikticus).